We begin with the raw amino-acid sequence, 278 residues long: Thiazole synthase (278 aa).

Lys-107 (schiff-base intermediate with DXP) is an active-site residue. 1-deoxy-D-xylulose 5-phosphate is bound by residues Gly-168, Ala-194–Gly-195, and Ala-216–Ser-217.

The protein belongs to the ThiG family. Homotetramer. Forms heterodimers with either ThiH or ThiS.

It is found in the cytoplasm. The enzyme catalyses [ThiS sulfur-carrier protein]-C-terminal-Gly-aminoethanethioate + 2-iminoacetate + 1-deoxy-D-xylulose 5-phosphate = [ThiS sulfur-carrier protein]-C-terminal Gly-Gly + 2-[(2R,5Z)-2-carboxy-4-methylthiazol-5(2H)-ylidene]ethyl phosphate + 2 H2O + H(+). It functions in the pathway cofactor biosynthesis; thiamine diphosphate biosynthesis. Functionally, catalyzes the rearrangement of 1-deoxy-D-xylulose 5-phosphate (DXP) to produce the thiazole phosphate moiety of thiamine. Sulfur is provided by the thiocarboxylate moiety of the carrier protein ThiS. In vitro, sulfur can be provided by H(2)S. This is Thiazole synthase from Corynebacterium jeikeium (strain K411).